Reading from the N-terminus, the 158-residue chain is Transcription elongation factor GreA (158 aa).

Belongs to the GreA/GreB family.

In terms of biological role, necessary for efficient RNA polymerase transcription elongation past template-encoded arresting sites. The arresting sites in DNA have the property of trapping a certain fraction of elongating RNA polymerases that pass through, resulting in locked ternary complexes. Cleavage of the nascent transcript by cleavage factors such as GreA or GreB allows the resumption of elongation from the new 3'terminus. GreA releases sequences of 2 to 3 nucleotides. This Polaromonas naphthalenivorans (strain CJ2) protein is Transcription elongation factor GreA.